The following is a 172-amino-acid chain: Carotene biosynthesis-related protein CBR, chloroplastic (172 aa).

The segment at 41 to 66 (AENNPSTPPPSSPSPPPPPPTPAAPT) is disordered. Pro residues predominate over residues 46–63 (STPPPSSPSPPPPPPTPA). The next 2 membrane-spanning stretches (helical) occupy residues 111-131 (PTLI…PAFA) and 152-172 (FAMI…IALF).

Belongs to the ELIP/psbS family.

The protein localises to the plastid. It is found in the chloroplast membrane. Its function is as follows. Putative zeaxanthin binding protein. That forms photoprotective complexes within the light-harvesting antennae. The polypeptide is Carotene biosynthesis-related protein CBR, chloroplastic (CBR) (Dunaliella salina (Green alga)).